The chain runs to 360 residues: Photosystem II protein D1 (360 aa).

Topologically, residues 1 to 28 are cytoplasmic; the sequence is MTTTLQRRESANLWERFCNWVTSTDNRL. A helical transmembrane segment spans residues 29 to 46; it reads YVGWFGVIMIPTLLAATI. Over 47 to 117 the chain is Lumenal; that stretch reads CFVIAFIAAP…NGGPYQLIIF (71 aa). His118 contacts chlorophyll a. Residues 118–133 traverse the membrane as a helical segment; that stretch reads HFLLGASCYMGRQWEL. Residues Tyr126 and Gln130 each coordinate pheophytin a. Topologically, residues 134 to 141 are cytoplasmic; the sequence is SYRLGMRP. The helical transmembrane segment at 142–156 threads the bilayer; it reads WICVAYSAPLASAFA. A pheophytin a-binding site is contributed by Tyr147. Residues 157 to 196 are Lumenal-facing; that stretch reads VFLIYPIGQGSFSDGMPLGISGTFNFMIVFQAEHNILMHP. The [CaMn4O5] cluster site is built by Asp170 and Glu189. The helical transmembrane segment at 197-218 threads the bilayer; the sequence is FHQLGVAGVFGGALFCAMHGSL. Chlorophyll a is bound at residue His198. A pheophytin a-binding site is contributed by Met214. Residues His215 and 264-265 contribute to the a quinone site; that span reads SF. His215 contributes to the Fe cation binding site. Residues 219–273 are Cytoplasmic-facing; it reads VTSSLIRETTETESANYGYKFGQEEETYNIVAAHGYFGRLIFQYASFNNSRSLHF. His272 lines the Fe cation pocket. A helical transmembrane segment spans residues 274–288; sequence FLAAWRVVGVWFAAL. Residues 289–360 lie on the Lumenal side of the membrane; the sequence is GISTMAFNLN…VAMIAPSING (72 aa). [CaMn4O5] cluster-binding residues include His332, Glu333, Asp342, and Ala344. Residues 345–360 constitute a propeptide that is removed on maturation; it reads SAESAPVAMIAPSING.

Belongs to the reaction center PufL/M/PsbA/D family. In terms of assembly, PSII is composed of 1 copy each of membrane proteins PsbA, PsbB, PsbC, PsbD, PsbE, PsbF, PsbH, PsbI, PsbJ, PsbK, PsbL, PsbM, PsbT, PsbX, PsbY, PsbZ, Psb30/Ycf12, peripheral proteins PsbO, CyanoQ (PsbQ), PsbU, PsbV and a large number of cofactors. It forms dimeric complexes. It depends on The D1/D2 heterodimer binds P680, chlorophylls that are the primary electron donor of PSII, and subsequent electron acceptors. It shares a non-heme iron and each subunit binds pheophytin, quinone, additional chlorophylls, carotenoids and lipids. D1 provides most of the ligands for the Mn4-Ca-O5 cluster of the oxygen-evolving complex (OEC). There is also a Cl(-1) ion associated with D1 and D2, which is required for oxygen evolution. The PSII complex binds additional chlorophylls, carotenoids and specific lipids. as a cofactor. C-terminally processed by CtpA; processing is essential to allow assembly of the oxygen-evolving complex and thus photosynthetic growth. Post-translationally, tyr-161 forms a radical intermediate that is referred to as redox-active TyrZ, YZ or Y-Z.

The protein resides in the cellular thylakoid membrane. The enzyme catalyses 2 a plastoquinone + 4 hnu + 2 H2O = 2 a plastoquinol + O2. Its function is as follows. Photosystem II (PSII) is a light-driven water:plastoquinone oxidoreductase that uses light energy to abstract electrons from H(2)O, generating O(2) and a proton gradient subsequently used for ATP formation. It consists of a core antenna complex that captures photons, and an electron transfer chain that converts photonic excitation into a charge separation. The D1/D2 (PsbA/PsbD) reaction center heterodimer binds P680, the primary electron donor of PSII as well as several subsequent electron acceptors. The protein is Photosystem II protein D1 of Thermostichus vulcanus (Synechococcus vulcanus).